The primary structure comprises 296 residues: MNNNKLLLVDGMALLFRAFFATAVHRNFMINDSGVPTNGVNGFLKHLITAVETFQPTHVVCCWDMGSKTYRNDLFQDYKANRSAPPVELIPQFDLAKEAAAELGIMNIGFAGYEADDCIGTLADLFANEADITVVTGDRDLLQLLTDKVSVALLQKGIGNYKVYTKETFYEETGVMPKALIDIKALMGDSSDNYPGVKGIGEKTAYKLIREYETIDRLLENLSLLPKGQQGKIQQGLSDLEMSRKLAEIHCSVPLACTLKDALFTLQMEQAADMLRRHQIKGIERMLEKLNAREIV.

Positions 175–262 (VMPKALIDIK…VPLACTLKDA (88 aa)) constitute a 5'-3' exonuclease domain.

5'-3' exonuclease acting preferentially on double-stranded DNA. The polypeptide is 5'-3' exonuclease (ypcP) (Bacillus subtilis (strain 168)).